The sequence spans 1386 residues: MISFVTLLAILGLLSISWADQTVRSVAGDQRVTDPVIVGDNSILDYYGGSNYDFSNNFEIGRGTLYIGKESYFSSFQSAPTDVPNSFHLLIKNTNNLQNNGQFIIENIKRHANQCSNSSIQVFPINFQNDGEFEIISGGVEGRCCLPTSVIAPQNFLNNGKFYYKVLTDTGSIYSGSCMQNVDIGASTTTTVNNNLWEFTGSINAQINGAVSGAAQINLDGSNMFVNANTFSGQVVNLINGGSFLQTSDPLSNIVVINGLGTSDTGVTSIAVKGKGKSFTYNPSSGIVKLTTVEGKTYAYQIGCGYNTKKFITNNDSGASYESADNFFVLTYSEPYSPQTCQLENSSIFSSNFISTSTSSSSSSSSASSLPSSMSSSLPSSLSSSLSSSLSSSMSSSMSSLFIIPPPYTTTRSSGSSIIDTEIVSFYSTTDSPGHTITGTTTTTLYGPHTHSSVSTPSSSSESSTTSNSSIESSSLPHTSVSSTPESSITPSSNTISSSPTSDFSSVQSSSIMESSSVVASSSVINSSSIVDSSSSSASSLPSSMSSSLSSSMSSSLPSSMSSSLSSSLSSSLSSSMSSSMSSLFIIPPPYTTTRSSGSSIIDTEIVSFYSTTDSPGHTITGTTTTTLYGPHTHSSVSTPSSSSESSTTSNSSIESSSLPHTSVSSTPESSITPSSNTISSSPTSDFSSVQSSSIMESSSVVASSSVINSSSIVDSSSSSASSLPSSMPSSLPSSMSSSLSSSMSSSLSSSLSSSLSSSMSSSMSSLFIIPPPYTTTRSSGSSIIDTEIVSFYSTTDSPGHTITGTTTTTLYGPHTHSSVSTPSSSSESSTTSNSSIESSSLPHTSVSSTPESSITPSSNTISSSPTSDFSSVQSSSIMESSSVVASSSATQSSSVINSSSIVDSSSSSASSLPSSMPSSLPSSLSSSLSSSLSSSMSSSMSSLFIIPPPYTTTRSSGSSIIDTEIVSFYSTTDSPGHTITGTTTTTLYESSIYSSSSSTIQESELSNTSRTTMTSNSSVSISSTSSRSSFSNTKSSTIVISQSASLPDSKTDIILSTSSNIGYSSRSLLSDLGTSISDSDIHHSVLHSTESYSSNESGTNPFTSIASLSNFIPESSSHTSTALGSENSVISSDILTTMSHPVATNSGDKPTTPKRSEQVSTTMTSSGPTPDTSSFDTDGMSAYSRPEFTTNSLEVNKSSTSQLGNNKQTFSNLQLESTRPHSENEVDNNTRLLQSIQQSSTYGTNNVNPLSPTGSISIPLTEDGQGDNNNWNSPATNDLCTQISFNLTATTITVTDRITITDSIHDISSEVITSYIYQTIVDQKTVTQTVDGKSLANKMSSIPKPSSRSLIQPQPPVAIELQEGAASTSRVSLVSLFISIILVLL.

The signal sequence occupies residues 1-19 (MISFVTLLAILGLLSISWA). 3 disulfide bridges follow: Cys-115/Cys-145, Cys-144/Cys-178, and Cys-304/Cys-341. Asn-117 carries N-linked (GlcNAc...) asparagine glycosylation. 4 N-linked (GlcNAc...) asparagine glycosylation sites follow: Asn-315, Asn-345, Asn-468, and Asn-526. The disordered stretch occupies residues 429–507 (TTDSPGHTIT…SSPTSDFSSV (79 aa)). Disordered regions lie at residues 530–553 (IVDS…SSSM) and 612–690 (TTDS…FSSV). N-linked (GlcNAc...) asparagine glycosylation is found at Asn-651 and Asn-709. Disordered regions lie at residues 714 to 739 (VDSS…MSSS) and 795 to 873 (TTDS…FSSV). 5 N-linked (GlcNAc...) asparagine glycosylation sites follow: Asn-834, Asn-898, Asn-1008, Asn-1017, and Asn-1096. The disordered stretch occupies residues 1000–1032 (TIQESELSNTSRTTMTSNSSVSISSTSSRSSFS). 2 stretches are compositionally biased toward polar residues: residues 1140 to 1150 (SHPVATNSGDK) and 1159 to 1177 (QVST…SSFD). A disordered region spans residues 1140 to 1186 (SHPVATNSGDKPTTPKRSEQVSTTMTSSGPTPDTSSFDTDGMSAYSR). An N-linked (GlcNAc...) asparagine glycan is attached at Asn-1197. The span at 1198–1218 (KSSTSQLGNNKQTFSNLQLES) shows a compositional bias: polar residues. Positions 1198–1227 (KSSTSQLGNNKQTFSNLQLESTRPHSENEV) are disordered. The N-linked (GlcNAc...) asparagine glycan is linked to Asn-1229. Over residues 1241-1259 (STYGTNNVNPLSPTGSISI) the composition is skewed to polar residues. The segment at 1241-1269 (STYGTNNVNPLSPTGSISIPLTEDGQGDN) is disordered. N-linked (GlcNAc...) asparagine glycosylation occurs at Asn-1287.

It is found in the secreted. It localises to the cell wall. Functionally, may play a role in cell adhesion. The protein is Adhesin AWP3b of Candida glabrata (strain ATCC 2001 / BCRC 20586 / JCM 3761 / NBRC 0622 / NRRL Y-65 / CBS 138) (Yeast).